Consider the following 313-residue polypeptide: Zinc transporter ZitB (313 aa).

The Cytoplasmic portion of the chain corresponds to 1 to 20 (MAHSHSHTSSHLPEDNNARR). A helical transmembrane segment spans residues 21-41 (LLYAFGVTAGFMLVEVVGGFL). Topologically, residues 42–47 (SGSLAL) are periplasmic. The chain crosses the membrane as a helical span at residues 48-68 (LADAGHMLTDTAALLFALLAV). At 69–89 (QFSRRPPTIRHTFGWLRLTTL) the chain is on the cytoplasmic side. The chain crosses the membrane as a helical span at residues 90-110 (AAFVNAIALVVITILIVWEAI). The Periplasmic segment spans residues 111–121 (ERFRTPRPVEG). Residues 122 to 142 (GMMMAIAVAGLLANILSFWLL) form a helical membrane-spanning segment. The Cytoplasmic portion of the chain corresponds to 143–159 (HHGSEEKNLNVRAAALH). Residues 160-180 (VLGDLLGSVGAIIAALIIIWT) traverse the membrane as a helical segment. A topological domain (periplasmic) is located at residue glycine 181. The chain crosses the membrane as a helical span at residues 182-202 (WTPADPILSILVSLLVLRSAW). Over 203–313 (RLLKDSVNEL…GVSGHSHHHH (111 aa)) the chain is Cytoplasmic.

Belongs to the cation diffusion facilitator (CDF) transporter (TC 2.A.4) family. SLC30A subfamily.

The protein localises to the cell inner membrane. Involved in zinc efflux across the cytoplasmic membrane, thus reducing zinc accumulation in the cytoplasm and rendering bacteria more resistant to zinc. It may contribute to zinc homeostasis at low concentrations of zinc, whereas ZntA is required for growth at more toxic concentrations. The chain is Zinc transporter ZitB (zitB) from Escherichia coli (strain K12).